The primary structure comprises 150 residues: uncharacterized protein (150 aa).

A signal peptide spans 1–23 (MYSILIACLVLLLCLIIYVGHRA).

This sequence belongs to the asfivirus EP152R family.

It is found in the virion. This is an uncharacterized protein from African swine fever virus (isolate Tick/South Africa/Pretoriuskop Pr4/1996) (ASFV).